The chain runs to 180 residues: 4-hydroxy-3-methylbut-2-enyl diphosphate reductase (180 aa).

Residue cysteine 12 coordinates [4Fe-4S] cluster. The (2E)-4-hydroxy-3-methylbut-2-enyl diphosphate site is built by histidine 41 and histidine 74. Residues histidine 41 and histidine 74 each contribute to the dimethylallyl diphosphate site. Residues histidine 41 and histidine 74 each contribute to the isopentenyl diphosphate site. Cysteine 96 contacts [4Fe-4S] cluster. Histidine 124 provides a ligand contact to (2E)-4-hydroxy-3-methylbut-2-enyl diphosphate. A dimethylallyl diphosphate-binding site is contributed by histidine 124. An isopentenyl diphosphate-binding site is contributed by histidine 124. The active-site Proton donor is the glutamate 126. (2E)-4-hydroxy-3-methylbut-2-enyl diphosphate is bound at residue threonine 168.

The protein belongs to the IspH family. [4Fe-4S] cluster is required as a cofactor.

The catalysed reaction is isopentenyl diphosphate + 2 oxidized [2Fe-2S]-[ferredoxin] + H2O = (2E)-4-hydroxy-3-methylbut-2-enyl diphosphate + 2 reduced [2Fe-2S]-[ferredoxin] + 2 H(+). The enzyme catalyses dimethylallyl diphosphate + 2 oxidized [2Fe-2S]-[ferredoxin] + H2O = (2E)-4-hydroxy-3-methylbut-2-enyl diphosphate + 2 reduced [2Fe-2S]-[ferredoxin] + 2 H(+). It functions in the pathway isoprenoid biosynthesis; dimethylallyl diphosphate biosynthesis; dimethylallyl diphosphate from (2E)-4-hydroxy-3-methylbutenyl diphosphate: step 1/1. Its pathway is isoprenoid biosynthesis; isopentenyl diphosphate biosynthesis via DXP pathway; isopentenyl diphosphate from 1-deoxy-D-xylulose 5-phosphate: step 6/6. In terms of biological role, catalyzes the conversion of 1-hydroxy-2-methyl-2-(E)-butenyl 4-diphosphate (HMBPP) into a mixture of isopentenyl diphosphate (IPP) and dimethylallyl diphosphate (DMAPP). Acts in the terminal step of the DOXP/MEP pathway for isoprenoid precursor biosynthesis. In Pseudomonas fluorescens, this protein is 4-hydroxy-3-methylbut-2-enyl diphosphate reductase.